Consider the following 177-residue polypeptide: Ubiquinol-cytochrome c reductase iron-sulfur subunit (177 aa).

Residues 18–38 (IVLTASSVAAVGAACAFWPII) traverse the membrane as a helical segment. The 88-residue stretch at 88 to 175 (ARAVKMSELI…YIFISDKKIR (88 aa)) folds into the Rieske domain. Cysteine 120, histidine 122, cysteine 139, and histidine 142 together coordinate [2Fe-2S] cluster. Residues cysteine 125 and cysteine 141 are joined by a disulfide bond.

It belongs to the Rieske iron-sulfur protein family. As to quaternary structure, the main subunits of complex b-c1 are: cytochrome b, cytochrome c1 and the Rieske protein. It depends on [2Fe-2S] cluster as a cofactor.

The protein resides in the cell membrane. The catalysed reaction is a quinol + 2 Fe(III)-[cytochrome c](out) = a quinone + 2 Fe(II)-[cytochrome c](out) + 2 H(+)(out). Component of the ubiquinol-cytochrome c reductase complex (complex III or cytochrome b-c1 complex), which is a respiratory chain that generates an electrochemical potential coupled to ATP synthesis. This Rickettsia prowazekii (strain Madrid E) protein is Ubiquinol-cytochrome c reductase iron-sulfur subunit (petA).